The chain runs to 925 residues: MNRFRVSKFRHTEARPPRRESWISDIRAGTAPSCRNHIKSSCSLIAFNSDRPGVLGIVPLQGQGEDKRRVAHLGCHSDLVTDLDFSPFDDFLLATGSADRTVKLWRLPGPGQALPSAPGVVLGPEDLPVEVLQFHPTSDGILVSAAGTTVKVWDAAKQQPLTELAAHGDLVQSAVWSRDGALVGTACKDKQLRIFDPRTKPRASQSTQAHENSRDSRLAWMGTWEHLVSTGFNQMREREVKLWDTRFFSSALASLTLDTSLGCLVPLLDPDSGLLVLAGKGERQLYCYEVVPQQPALSPVTQCVLESVLRGAALVPRQALAVMSCEVLRVLQLSDTAIVPIGYHVPRKAVEFHEDLFPDTAGCVPATDPHSWWAGDNQQVQKVSLNPACRPHPSFTSCLVPPAEPLPDTAQPAVMETPVGDADASEGFSSPPSSLTSPSTPSSLGPSLSSTSGIGTSPSLRSLQSLLGPSSKFRHAQGTVLHRDSHITNLKGLNLTTPGESDGFCANKLRVAVPLLSSGGQVAVLELRKPGRLPDTALPTLQNGAAVTDLAWDPFDPHRLAVAGEDARIRLWRVPAEGLEEVLTTPETVLTGHTEKICSLRFHPLAANVLASSSYDLTVRIWDLQAGADRLKLQGHQDQIFSLAWSPDGQQLATVCKDGRVRVYRPRSGPEPLQEGPGPKGGRGARIVWVCDGRCLLVSGFDSQSERQLLLYEAEALAGGPLAVLGLDVAPSTLLPSYDPDTGLVLLTGKGDTRVFLYELLPESPFFLECNSFTSPDPHKGLVLLPKTECDVREVELMRCLRLRQSSLEPVAFRLPRVRKEFFQDDVFPDTAVIWEPVLSAEAWLQGANGQPWLLSLQPPDMSPVSQAPREAPARRAPSSAQYLEEKSDQQKKEELLNAMVAKLGNREDPLPQDSFEGVDEDEWD.

WD repeat units lie at residues 75–115, 124–163, 166–205, and 209–253; these read CHSD…QALP, PEDL…PLTE, AHGD…RASQ, and AHEN…SALA. The disordered stretch occupies residues 419-461; sequence VGDADASEGFSSPPSSLTSPSTPSSLGPSLSSTSGIGTSPSLR. Residues 429 to 460 show a composition bias toward low complexity; sequence SSPPSSLTSPSTPSSLGPSLSSTSGIGTSPSL. 2 positions are modified to phosphoserine: Ser462 and Ser465. Residue Lys472 forms a Glycyl lysine isopeptide (Lys-Gly) (interchain with G-Cter in ubiquitin) linkage. 3 WD repeats span residues 542–582, 592–632, and 635–674; these read QNGA…LEEV, GHTE…DRLK, and GHQD…EPLQ. Lys680 is covalently cross-linked (Glycyl lysine isopeptide (Lys-Gly) (interchain with G-Cter in ubiquitin)). One copy of the WD 8 repeat lies at 728–768; it reads DVAPSTLLPSYDPDTGLVLLTGKGDTRVFLYELLPESPFFL. The disordered stretch occupies residues 858–925; that stretch reads QPPDMSPVSQ…FEGVDEDEWD (68 aa). Positions 866–882 are enriched in low complexity; that stretch reads SQAPREAPARRAPSSAQ. A compositionally biased stretch (basic and acidic residues) spans 884–896; the sequence is LEEKSDQQKKEEL. Residue Ser915 is modified to Phosphoserine.

This sequence belongs to the WD repeat coronin family. Interacts with clathrin adapter AP1 complex. This interaction takes place at Golgi membranes and not AP1-positive endosomal membranes. Interacts (when ubiquitinated at Lys-472) with EPS15. In terms of processing, the membrane-associated form is phosphorylated on tyrosine residues. Post-translationally, ubiquitinated via 'Lys-33'-linked ubiquitin chains by the BCR(KLHL20) E3 ubiquitin ligase complex: 'Lys-33'-linked ubiquitination promotes interaction with EPS15 and facilitates actin polymerization at the trans-Golgi network, thereby facilitating post-Golgi trafficking. Deubiquitinated by ZRANB1/TRABID. In terms of tissue distribution, widely expressed. Expressed in the spleen, peripheral leukocytes, testes, brain, thymus and small intestine.

The protein localises to the golgi apparatus membrane. It localises to the golgi apparatus. Its subcellular location is the trans-Golgi network. It is found in the cytoplasmic vesicle. The protein resides in the cytoplasm. The protein localises to the cytosol. Functionally, F-actin regulator involved in anterograde Golgi to endosome transport: upon ubiquitination via 'Lys-33'-linked ubiquitin chains by the BCR(KLHL20) E3 ubiquitin ligase complex, interacts with EPS15 and localizes to the trans-Golgi network, where it promotes actin polymerization, thereby facilitating post-Golgi trafficking. May play a role in the maintenance of the Golgi apparatus morphology. The protein is Coronin-7 (CORO7) of Homo sapiens (Human).